Consider the following 475-residue polypeptide: UDP-N-acetylmuramate--L-alanine ligase (475 aa).

119-125 (GTHGKTT) contacts ATP.

This sequence belongs to the MurCDEF family.

Its subcellular location is the cytoplasm. It carries out the reaction UDP-N-acetyl-alpha-D-muramate + L-alanine + ATP = UDP-N-acetyl-alpha-D-muramoyl-L-alanine + ADP + phosphate + H(+). Its pathway is cell wall biogenesis; peptidoglycan biosynthesis. Cell wall formation. This Wigglesworthia glossinidia brevipalpis protein is UDP-N-acetylmuramate--L-alanine ligase.